Here is a 994-residue protein sequence, read N- to C-terminus: Tyrosine-protein kinase Mer (994 aa).

The signal sequence occupies residues 1 to 18; sequence MVLAPLLLGLLLLPALWS. Residues 19 to 497 are Extracellular-facing; it reads GGTAEKWEET…TPAPGNTDSM (479 aa). Residues 44 to 78 are disordered; the sequence is VNHRPFSAPHSSRDQLPPPQTGRSHPAHTAAPQVT. 2 Ig-like C2-type domains span residues 75-181 and 192-268; these read PQVT…EIVS and PYFI…LTVS. Residues Asn91, Asn108, Asn165, Asn202, Asn210, Asn229, Asn289, Asn311, Asn324, Asn331, Asn349, Asn384, Asn390, Asn437, and Asn449 are each glycosylated (N-linked (GlcNAc...) asparagine). A disulfide bridge connects residues Cys109 and Cys170. Residues Cys213 and Cys257 are joined by a disulfide bond. Fibronectin type-III domains lie at 281–376 and 381–478; these read PPTE…TTEG and APLN…IPEH. A helical transmembrane segment spans residues 498–518; sequence FIILGCFCGFILIGLILCISL. Over 519 to 994 the chain is Cytoplasmic; sequence ALRRRVQETK…DSLEDSEVLM (476 aa). Ser538 is modified (phosphoserine). Residues 582–852 form the Protein kinase domain; that stretch reads LVLGKVLGEG…SVLRLQLEKL (271 aa). Residues 588–596 and Lys610 each bind ATP; that span reads LGEGEFGSV. Asp718 functions as the Proton acceptor in the catalytic mechanism. A phosphotyrosine; by autocatalysis mark is found at Tyr744, Tyr748, Tyr749, and Tyr867.

Belongs to the protein kinase superfamily. Tyr protein kinase family. AXL/UFO subfamily. As to quaternary structure, interacts (upon activation) with TNK2; stimulates TNK2 autophosphorylation. Interacts (via N-terminus) with extracellular ligands LGALS3, TUB, TULP1 and GAS6. Interacts with VAV1 in a phosphotyrosine-independent manner. Interacts with TIMD4; this interaction enhances TIMD4-mediated efferocytosis. Post-translationally, autophosphorylated on Tyr-744, Tyr-748 and Tyr-749 in the activation loop allowing full activity. Autophosphorylated on Tyr-867 leading to recruitment of downstream partners of the signaling cascade such as PLCG2. Expressed predominantly in the hematopoietic lineages: macrophages, NK cells, NKT cells, dendritic cells and platelets.

Its subcellular location is the cell membrane. The enzyme catalyses L-tyrosyl-[protein] + ATP = O-phospho-L-tyrosyl-[protein] + ADP + H(+). Receptor tyrosine kinase that transduces signals from the extracellular matrix into the cytoplasm by binding to several ligands including LGALS3, TUB, TULP1 or GAS6. Regulates many physiological processes including cell survival, migration, differentiation, and phagocytosis of apoptotic cells (efferocytosis). Ligand binding at the cell surface induces autophosphorylation of MERTK on its intracellular domain that provides docking sites for downstream signaling molecules. Following activation by ligand, interacts with GRB2 or PLCG2 and induces phosphorylation of MAPK1, MAPK2, FAK/PTK2 or RAC1. MERTK signaling plays a role in various processes such as macrophage clearance of apoptotic cells, platelet aggregation, cytoskeleton reorganization and engulfment. Functions in the retinal pigment epithelium (RPE) as a regulator of rod outer segments fragments phagocytosis. Also plays an important role in inhibition of Toll-like receptors (TLRs)-mediated innate immune response by activating STAT1, which selectively induces production of suppressors of cytokine signaling SOCS1 and SOCS3. The chain is Tyrosine-protein kinase Mer (Mertk) from Mus musculus (Mouse).